The following is a 687-amino-acid chain: Putative ammonium transporter 3 (687 aa).

Helical transmembrane passes span Ala-39 to Leu-59, Val-77 to Gly-97, Ala-134 to Val-154, Ser-162 to Trp-182, Phe-196 to Phe-216, Leu-240 to Ile-260, Ala-272 to Val-292, Val-299 to Val-319, Trp-323 to Leu-343, Val-352 to Phe-372, and Cys-404 to Ser-424. Disordered stretches follow at residues Arg-521 to Gln-544, Ala-549 to Glu-568, and Pro-592 to Val-687. The segment covering Ala-549–Gly-564 has biased composition (polar residues). Low complexity-rich tracts occupy residues Ser-614 to Ile-632 and Ser-648 to Thr-665.

It belongs to the ammonia transporter channel (TC 1.A.11.2) family.

The protein localises to the membrane. In terms of biological role, involved in the uptake of ammonia. The polypeptide is Putative ammonium transporter 3 (amt-3) (Caenorhabditis elegans).